The primary structure comprises 30 residues: Glucagon-like peptide (30 aa).

R30 bears the Arginine amide mark.

It belongs to the glucagon family.

Its subcellular location is the secreted. This chain is Glucagon-like peptide, found in Anguilla anguilla (European freshwater eel).